Here is a 414-residue protein sequence, read N- to C-terminus: MLAIEDVRAYEVLDSRGNPTVKAEVTLSDGSVGAAIVPSGASTGSKEALELRDKDERFGGKGVLKAVANVNESIAGEILGLDAFNQTQLDDTLRELDGTKNYSNLGANATLGVSMAAARAAAAALGMPLYRYLGGANASILPVPMCNIINGGAHANNNVDFQEFMITPFGFTSFKEALRSVCEIYAILKKELANSGHSTALGDEGGFAPNLANNTEPIDLLMTCIKKAGYENRVKIALDVASTEFFKDGKYHMEDKAFSSEDLIERYVELCAKYPICSIEDGLAENDFEGWIKLTEKLGNKIQLVGDDLFVTNEDILREGIIKKMANAVLIKPNQIGTITQTMRTVRLAQRNNYKCVMSHRSGESEDAFIADFAVALNTGQIKTGALARGERTAKYNRLLEIELESDEYLGEKL.

Position 162 (Gln162) interacts with (2R)-2-phosphoglycerate. The active-site Proton donor is the Glu204. Residues Asp239, Glu280, and Asp307 each coordinate Mg(2+). (2R)-2-phosphoglycerate is bound by residues Lys332, Arg361, Ser362, and Lys383. The Proton acceptor role is filled by Lys332.

Belongs to the enolase family. Mg(2+) serves as cofactor.

The protein resides in the cytoplasm. It is found in the secreted. It localises to the cell surface. It catalyses the reaction (2R)-2-phosphoglycerate = phosphoenolpyruvate + H2O. The protein operates within carbohydrate degradation; glycolysis; pyruvate from D-glyceraldehyde 3-phosphate: step 4/5. In terms of biological role, catalyzes the reversible conversion of 2-phosphoglycerate (2-PG) into phosphoenolpyruvate (PEP). It is essential for the degradation of carbohydrates via glycolysis. The protein is Enolase of Campylobacter jejuni subsp. doylei (strain ATCC BAA-1458 / RM4099 / 269.97).